Reading from the N-terminus, the 107-residue chain is Protein RnfH (107 aa).

The tract at residues 82-107 is disordered; the sequence is ARRKRAEKAKEEGRANKVTGGRPIER.

The protein belongs to the UPF0125 (RnfH) family.

The protein is Protein RnfH of Pseudoalteromonas translucida (strain TAC 125).